Consider the following 181-residue polypeptide: uncharacterized protein (181 aa).

This is an uncharacterized protein from Acidianus filamentous virus 2 (isolate Italy/Pozzuoli) (AFV-2).